We begin with the raw amino-acid sequence, 320 residues long: Lipoyl synthase (320 aa).

A disordered region spans residues 1 to 26; that stretch reads MVTVVDRVTSRRLRHPEKMHRPDTSI. [4Fe-4S] cluster contacts are provided by Cys59, Cys64, Cys70, Cys85, Cys89, Cys92, and Ser298. The Radical SAM core domain occupies 71 to 287; it reads WSQRHASFMI…AKIGKVKGFL (217 aa).

The protein belongs to the radical SAM superfamily. Lipoyl synthase family. Requires [4Fe-4S] cluster as cofactor.

It localises to the cytoplasm. The enzyme catalyses [[Fe-S] cluster scaffold protein carrying a second [4Fe-4S](2+) cluster] + N(6)-octanoyl-L-lysyl-[protein] + 2 oxidized [2Fe-2S]-[ferredoxin] + 2 S-adenosyl-L-methionine + 4 H(+) = [[Fe-S] cluster scaffold protein] + N(6)-[(R)-dihydrolipoyl]-L-lysyl-[protein] + 4 Fe(3+) + 2 hydrogen sulfide + 2 5'-deoxyadenosine + 2 L-methionine + 2 reduced [2Fe-2S]-[ferredoxin]. It participates in protein modification; protein lipoylation via endogenous pathway; protein N(6)-(lipoyl)lysine from octanoyl-[acyl-carrier-protein]: step 2/2. Its function is as follows. Catalyzes the radical-mediated insertion of two sulfur atoms into the C-6 and C-8 positions of the octanoyl moiety bound to the lipoyl domains of lipoate-dependent enzymes, thereby converting the octanoylated domains into lipoylated derivatives. In Bartonella quintana (strain Toulouse) (Rochalimaea quintana), this protein is Lipoyl synthase.